A 371-amino-acid chain; its full sequence is Queuine tRNA-ribosyltransferase (371 aa).

Residue D93 is the Proton acceptor of the active site. Substrate-binding positions include 93–97 (DSGGF), D147, Q191, and G218. The RNA binding stretch occupies residues 249–255 (GVGTVVD). D268 acts as the Nucleophile in catalysis. Residues 273–277 (TRNAR) form an RNA binding; important for wobble base 34 recognition region. Residues C306, C308, C311, and H337 each coordinate Zn(2+).

The protein belongs to the queuine tRNA-ribosyltransferase family. In terms of assembly, homodimer. Within each dimer, one monomer is responsible for RNA recognition and catalysis, while the other monomer binds to the replacement base PreQ1. It depends on Zn(2+) as a cofactor.

It catalyses the reaction 7-aminomethyl-7-carbaguanine + guanosine(34) in tRNA = 7-aminomethyl-7-carbaguanosine(34) in tRNA + guanine. It functions in the pathway tRNA modification; tRNA-queuosine biosynthesis. In terms of biological role, catalyzes the base-exchange of a guanine (G) residue with the queuine precursor 7-aminomethyl-7-deazaguanine (PreQ1) at position 34 (anticodon wobble position) in tRNAs with GU(N) anticodons (tRNA-Asp, -Asn, -His and -Tyr). Catalysis occurs through a double-displacement mechanism. The nucleophile active site attacks the C1' of nucleotide 34 to detach the guanine base from the RNA, forming a covalent enzyme-RNA intermediate. The proton acceptor active site deprotonates the incoming PreQ1, allowing a nucleophilic attack on the C1' of the ribose to form the product. After dissociation, two additional enzymatic reactions on the tRNA convert PreQ1 to queuine (Q), resulting in the hypermodified nucleoside queuosine (7-(((4,5-cis-dihydroxy-2-cyclopenten-1-yl)amino)methyl)-7-deazaguanosine). The sequence is that of Queuine tRNA-ribosyltransferase from Leptospira biflexa serovar Patoc (strain Patoc 1 / Ames).